A 738-amino-acid polypeptide reads, in one-letter code: MEVCNCIEPQWPADELLMKYQYISDFFIAIAYFSIPLELIYFVKKSAVFPYRWVLVQFGAFIVLCGATHLINLWTFTTHSRTVALVMTTAKVLTAVVSCATALMLVHIIPDLLSVKTRELFLKNKAAELDREMGLIRTQEETGRHVRMLTHEIRSTLDRHTILKTTLVELGRTLALEECALWMPTRTGLELQLSYTLRHQHPVEYTVPIQLPVINQVFGTSRAVKISPNSPVARLRPVSGKYMLGEVVAVRVPLLHLSNFQINDWPELSTKRYALMVLMLPSDSARQWHVHELELVEVVADQVAVALSHAAILEESMRARDLLMEQNVALDLARREAETAIRARNDFLAVMNHEMRTPMHAIIALSSLLQETELTPEQRLMVETILKSSNLLATLMNDVLDLSRLEDGSLQLELGTFNLHTLFREVLNLIKPIAVVKKLPITLNLAPDLPEFVVGDEKRLMQIILNIVGNAVKFSKQGSISVTALVTKSDTRAADFFVVPTGSHFYLRVKVKDSGAGINPQDIPKIFTKFAQTQSLATRSSGGSGLGLAISKRFVNLMEGNIWIESDGLGKGCTAIFDVKLGISERSNESKQSGIPKVPAIPRHSNFTGLKVLVMDENGVSRMVTKGLLVHLGCEVTTVSSNEECLRVVSHEHKVVFMDVCMPGVENYQIALRIHEKFTKQRHQRPLLVALSGNTDKSTKEKCMSFGLDGVLLKPVSLDNIRDVLSDLLEPRVLYEGM.

3 consecutive transmembrane segments (helical) span residues 23–43, 53–73, and 92–112; these read ISDF…IYFV, WVLV…LINL, and VLTA…IPDL. Cu cation contacts are provided by Cys65 and His69. One can recognise a GAF domain in the interval 158-307; it reads DRHTILKTTL…VVADQVAVAL (150 aa). In terms of domain architecture, Histidine kinase spans 350 to 585; sequence VMNHEMRTPM…IFDVKLGISE (236 aa). Residue His353 is modified to Phosphohistidine; by autocatalysis. Residues 470-473, Asp513, Lys529, Ser544, and Leu548 contribute to the ADP site; that span reads NAVK. The Response regulatory domain occupies 611–729; that stretch reads KVLVMDENGV…NIRDVLSDLL (119 aa). At Asp659 the chain carries 4-aspartylphosphate. Lys714 participates in a covalent cross-link: Glycyl lysine isopeptide (Lys-Gly) (interchain with G-Cter in ubiquitin).

This sequence belongs to the ethylene receptor family. As to quaternary structure, homodimer; disulfide-linked. Heteromer with ERS1, ERS2, ETR2 and EIN4. Interacts with AHP1, AHP2 and AHP3. Interacts with RTE1. Interacts with EIN2. The cofactor is Cu cation. Post-translationally, autophosphorylated. Phosphorylation at His-353 modulates the interaction with EIN2. Leaves, roots, stems, seedlings, flowers, anthers, carpels and ovules.

The protein resides in the endoplasmic reticulum membrane. It catalyses the reaction ATP + protein L-histidine = ADP + protein N-phospho-L-histidine.. In terms of biological role, ethylene receptor related to bacterial two-component regulators. Acts as a redundant negative regulator of ethylene signaling. In the presence of ethylene, the auto-kinase activity of ETR1 is inhibited and the non-phosphorylated kinase domain binds tightly to the corresponding domain of EIN2. This is Ethylene receptor 1 from Arabidopsis thaliana (Mouse-ear cress).